The following is a 255-amino-acid chain: Type III pantothenate kinase (255 aa).

Position 6-13 (6-13 (DIGNTNIK)) interacts with ATP. Residue 107-110 (GADR) coordinates substrate. Catalysis depends on Asp-109, which acts as the Proton acceptor. Thr-132 is a binding site for ATP. A substrate-binding site is contributed by Thr-184.

The protein belongs to the type III pantothenate kinase family. Homodimer. It depends on NH4(+) as a cofactor. K(+) serves as cofactor.

Its subcellular location is the cytoplasm. It carries out the reaction (R)-pantothenate + ATP = (R)-4'-phosphopantothenate + ADP + H(+). It functions in the pathway cofactor biosynthesis; coenzyme A biosynthesis; CoA from (R)-pantothenate: step 1/5. Its function is as follows. Catalyzes the phosphorylation of pantothenate (Pan), the first step in CoA biosynthesis. This chain is Type III pantothenate kinase, found in Roseiflexus sp. (strain RS-1).